Consider the following 193-residue polypeptide: Xanthine phosphoribosyltransferase (193 aa).

Xanthine is bound by residues Leu20 and Thr27. Residue 128 to 132 participates in 5-phospho-alpha-D-ribose 1-diphosphate binding; sequence ANGQA. Lys156 is a binding site for xanthine.

This sequence belongs to the purine/pyrimidine phosphoribosyltransferase family. Xpt subfamily. Homodimer.

The protein resides in the cytoplasm. It carries out the reaction XMP + diphosphate = xanthine + 5-phospho-alpha-D-ribose 1-diphosphate. The protein operates within purine metabolism; XMP biosynthesis via salvage pathway; XMP from xanthine: step 1/1. Functionally, converts the preformed base xanthine, a product of nucleic acid breakdown, to xanthosine 5'-monophosphate (XMP), so it can be reused for RNA or DNA synthesis. The protein is Xanthine phosphoribosyltransferase of Streptococcus pneumoniae serotype 2 (strain D39 / NCTC 7466).